Reading from the N-terminus, the 288-residue chain is Sulfur carrier protein FdhD (288 aa).

The active-site Cysteine persulfide intermediate is Cys122. 268–273 contacts Mo-bis(molybdopterin guanine dinucleotide); that stretch reads FVRGER.

Belongs to the FdhD family.

It localises to the cytoplasm. In terms of biological role, required for formate dehydrogenase (FDH) activity. Acts as a sulfur carrier protein that transfers sulfur from IscS to the molybdenum cofactor prior to its insertion into FDH. The protein is Sulfur carrier protein FdhD of Anaeromyxobacter dehalogenans (strain 2CP-1 / ATCC BAA-258).